The chain runs to 560 residues: Potassium-transporting ATPase potassium-binding subunit (560 aa).

The next 12 membrane-spanning stretches (helical) occupy residues 11–31, 63–83, 134–154, 179–199, 254–274, 282–302, 329–349, 356–376, 379–399, 417–437, 488–508, and 530–550; these read IFLLLIVIAVPLGKYLYVAFF, SYCTALLIVNAALLGISYGLL, FVTMMMFTSAATGLTVATALI, LLPLSVIVTILLVAFGVPQTF, VIEMLSMWCIPAALPFTYGHA, WVLFATMFVLFVMMLGVVYNA, FGIPLSSLFTAITTAATTGSV, LTPIGGLVPLALMMLNNVFGG, VGFVNIMMYAMIAVFLSGLMV, LIVIALLLHPLIILAPSAIAL, VVMLLGRYVSIIAMLAVAGSL, and VILFGTVFIIGALTFFPVLIL.

Belongs to the KdpA family. As to quaternary structure, the system is composed of three essential subunits: KdpA, KdpB and KdpC.

The protein localises to the cell membrane. Part of the high-affinity ATP-driven potassium transport (or Kdp) system, which catalyzes the hydrolysis of ATP coupled with the electrogenic transport of potassium into the cytoplasm. This subunit binds the extracellular potassium ions and delivers the ions to the membrane domain of KdpB through an intramembrane tunnel. The chain is Potassium-transporting ATPase potassium-binding subunit from Geobacillus kaustophilus (strain HTA426).